A 742-amino-acid chain; its full sequence is Zinc finger MYND domain-containing protein 15 (742 aa).

The disordered stretch occupies residues 109–199 (LEDGEEGEEE…QKRKGQRSEA (91 aa)). The segment covering 110–127 (EDGEEGEEEEEEDEEEEK) has biased composition (acidic residues). The segment covering 151–161 (SRESPQETNPP) has biased composition (polar residues). Basic and acidic residues predominate over residues 166 to 189 (EAAREAGGGKDGCREDRVENETRP). Cys313, Cys316, Cys328, Cys331, Cys337, Cys341, His355, and Cys359 together coordinate Zn(2+). An MYND-type zinc finger spans residues 313–359 (CHVCHRHSFEAKLTPCPQCSAVLYCGEACLRADWQRCPDDVSHRFWC). 2 disordered regions span residues 565–590 (EVSV…GRRD) and 701–742 (QGSG…RRRK). Residues 708–724 (APGPPPPSPTPSAPPAP) show a composition bias toward pro residues. The segment covering 725 to 742 (TRRRRGEKKPGRGARRRK) has biased composition (basic residues).

As to quaternary structure, interacts with HDAC1, HDAC3, HDAC6 and, to a lesser extent, with HDAC7.

The protein resides in the nucleus. The protein localises to the cytoplasm. Its function is as follows. Acts as a transcriptional repressor through interaction with histone deacetylases (HDACs). May be important for spermiogenesis. This Homo sapiens (Human) protein is Zinc finger MYND domain-containing protein 15 (ZMYND15).